The sequence spans 623 residues: Phosphoenolpyruvate carboxykinase [GTP] (623 aa).

Residues Arg-86 and 220 to 222 contribute to the substrate site; that span reads YGG. Residues Lys-229 and His-248 each coordinate Mn(2+). Ser-270 contacts substrate. 271 to 276 contacts GTP; that stretch reads MCGKTS. Cys-272 is a catalytic residue. Residue Asp-289 participates in Mn(2+) binding. 384–386 is a binding site for substrate; sequence NAR. GTP is bound by residues Arg-386 and Arg-418.

Belongs to the phosphoenolpyruvate carboxykinase [GTP] family. Homotetramer. Requires Mn(2+) as cofactor.

Its subcellular location is the cytoplasm. It carries out the reaction oxaloacetate + GTP = phosphoenolpyruvate + GDP + CO2. Its pathway is carbohydrate biosynthesis; gluconeogenesis. Functionally, involved in the gluconeogenesis. Catalyzes the conversion of oxaloacetate (OAA) to phosphoenolpyruvate (PEP), the rate-limiting step in the metabolic pathway that produces glucose from lactate and other precursors derived from the citric acid cycle. This chain is Phosphoenolpyruvate carboxykinase [GTP] (pckG), found in Thermococcus kodakarensis (strain ATCC BAA-918 / JCM 12380 / KOD1) (Pyrococcus kodakaraensis (strain KOD1)).